Reading from the N-terminus, the 292-residue chain is Protoheme IX farnesyltransferase (292 aa).

9 helical membrane-spanning segments follow: residues 11–31 (FGIV…GFQI), 37–57 (WKIF…SLAL), 85–105 (AAAG…LFKL), 108–128 (VAGW…TLWW), 133–153 (VFAA…GYAV), 163–183 (SLYL…VLAI), 199–219 (VALG…VYVG), 223–243 (AAPM…PFVF), and 261–281 (WLAF…IPVI).

This sequence belongs to the UbiA prenyltransferase family. Protoheme IX farnesyltransferase subfamily.

The protein resides in the cell inner membrane. The enzyme catalyses heme b + (2E,6E)-farnesyl diphosphate + H2O = Fe(II)-heme o + diphosphate. It participates in porphyrin-containing compound metabolism; heme O biosynthesis; heme O from protoheme: step 1/1. In terms of biological role, converts heme B (protoheme IX) to heme O by substitution of the vinyl group on carbon 2 of heme B porphyrin ring with a hydroxyethyl farnesyl side group. The chain is Protoheme IX farnesyltransferase from Bdellovibrio bacteriovorus (strain ATCC 15356 / DSM 50701 / NCIMB 9529 / HD100).